A 386-amino-acid chain; its full sequence is Succinate--CoA ligase [ADP-forming] subunit beta (386 aa).

The region spanning 9–237 (KEVLRDFGVN…LSAEHPLEVE (229 aa)) is the ATP-grasp domain. ATP contacts are provided by residues Lys-45, 52–54 (GRG), Val-94, and Glu-101. Residues Asn-192 and Asp-206 each contribute to the Mg(2+) site. Residues Asn-258 and 315–317 (GIT) contribute to the substrate site.

The protein belongs to the succinate/malate CoA ligase beta subunit family. As to quaternary structure, heterotetramer of two alpha and two beta subunits. It depends on Mg(2+) as a cofactor.

The enzyme catalyses succinate + ATP + CoA = succinyl-CoA + ADP + phosphate. The catalysed reaction is GTP + succinate + CoA = succinyl-CoA + GDP + phosphate. It participates in carbohydrate metabolism; tricarboxylic acid cycle; succinate from succinyl-CoA (ligase route): step 1/1. Functionally, succinyl-CoA synthetase functions in the citric acid cycle (TCA), coupling the hydrolysis of succinyl-CoA to the synthesis of either ATP or GTP and thus represents the only step of substrate-level phosphorylation in the TCA. The beta subunit provides nucleotide specificity of the enzyme and binds the substrate succinate, while the binding sites for coenzyme A and phosphate are found in the alpha subunit. In Deinococcus radiodurans (strain ATCC 13939 / DSM 20539 / JCM 16871 / CCUG 27074 / LMG 4051 / NBRC 15346 / NCIMB 9279 / VKM B-1422 / R1), this protein is Succinate--CoA ligase [ADP-forming] subunit beta.